The chain runs to 360 residues: Uroporphyrinogen decarboxylase (360 aa).

Substrate is bound by residues 27 to 31 (RQSGR), phenylalanine 46, aspartate 77, tyrosine 154, threonine 209, and histidine 327.

It belongs to the uroporphyrinogen decarboxylase family. In terms of assembly, homodimer.

The protein resides in the cytoplasm. It carries out the reaction uroporphyrinogen III + 4 H(+) = coproporphyrinogen III + 4 CO2. Its pathway is porphyrin-containing compound metabolism; protoporphyrin-IX biosynthesis; coproporphyrinogen-III from 5-aminolevulinate: step 4/4. In terms of biological role, catalyzes the decarboxylation of four acetate groups of uroporphyrinogen-III to yield coproporphyrinogen-III. This chain is Uroporphyrinogen decarboxylase, found in Wigglesworthia glossinidia brevipalpis.